A 471-amino-acid polypeptide reads, in one-letter code: Collagenase 3 (471 aa).

The N-terminal stretch at 1–19 (MQPGVLAACLLLSWTHCWS) is a signal peptide. A propeptide spans 20 to 103 (LPLLNSNEDD…PRCGVPDVGE (84 aa)) (activation peptide). The short motif at 94–101 (PRCGVPDV) is the Cysteine switch element. Position 96 (C96) interacts with Zn(2+). N117 is a glycosylation site (N-linked (GlcNAc...) asparagine). D128 serves as a coordination point for Ca(2+). 2 N-linked (GlcNAc...) asparagine glycosylation sites follow: N152 and N158. D162 provides a ligand contact to Ca(2+). 2 residues coordinate Zn(2+): H172 and D174. Residues 176 to 246 (YPFDGPSGLL…GALMFPIYTY (71 aa)) are interaction with TIMP2. Ca(2+)-binding residues include D179, G180, S182, and L184. H187 contacts Zn(2+). The Ca(2+) site is built by N194, G196, and D198. H200 provides a ligand contact to Zn(2+). D202, D203, and E205 together coordinate Ca(2+). H222 contributes to the Zn(2+) binding site. Residue E223 is part of the active site. Zn(2+) is bound by residues H226, H232, and M240. Positions 263 to 284 (QSLYGPGDEDPNPKHPKTPDKC) are disordered. The interaction with collagen stretch occupies residues 268 to 471 (PGDEDPNPKH…VMPTNSLLWC (204 aa)). Residues 273–284 (PNPKHPKTPDKC) show a composition bias toward basic and acidic residues. Hemopexin repeat units lie at residues 281-330 (PDKC…WPEL), 331-377 (PNRI…GFPR), 379-427 (VKKI…FPGI), and 428-471 (GGKV…LLWC). C284 and C471 are oxidised to a cystine. D291, I293, D335, and A337 together coordinate Ca(2+). A Phosphotyrosine; by PKDCC modification is found at Y366. Ca(2+) is bound by residues S383 and A385. N409 carries an N-linked (GlcNAc...) asparagine glycan. Positions 432 and 434 each coordinate Ca(2+).

This sequence belongs to the peptidase M10A family. Requires Ca(2+) as cofactor. It depends on Zn(2+) as a cofactor. In terms of processing, the proenzyme is activated by removal of the propeptide; this cleavage can be effected by other matrix metalloproteinases, such as MMP2, MMP3 and MMP14 and may involve several cleavage steps. Cleavage can also be autocatalytic, after partial maturation by another protease or after treatment with 4-aminophenylmercuric acetate (APMA) (in vitro). Post-translationally, N-glycosylated. Tyrosine phosphorylated by PKDCC/VLK.

It localises to the secreted. The protein localises to the extracellular space. It is found in the extracellular matrix. Plays a role in the degradation of extracellular matrix proteins including fibrillar collagen, fibronectin, TNC and ACAN. Cleaves triple helical collagens, including type I, type II and type III collagen, but has the highest activity with soluble type II collagen. Can also degrade collagen type IV, type XIV and type X. May also function by activating or degrading key regulatory proteins, such as TGFB1 and CCN2. Plays a role in wound healing, tissue remodeling, cartilage degradation, bone development, bone mineralization and ossification. Required for normal embryonic bone development and ossification. Plays a role in the healing of bone fractures via endochondral ossification. Plays a role in wound healing, probably by a mechanism that involves proteolytic activation of TGFB1 and degradation of CCN2. Plays a role in keratinocyte migration during wound healing. May play a role in cell migration and in tumor cell invasion. The chain is Collagenase 3 (MMP13) from Oryctolagus cuniculus (Rabbit).